Consider the following 316-residue polypeptide: Glutathione synthetase (316 aa).

Positions 124-310 (EKLFTAWFPE…ITGKLMDAIE (187 aa)) constitute an ATP-grasp domain. 150-207 (FREEHGDVILKPLDGMGGASIFRVKENDPNVSVIIETLTNHGQNYAMAQTFVPDISNG) contacts ATP. Positions 281 and 283 each coordinate Mg(2+).

This sequence belongs to the prokaryotic GSH synthase family. It depends on Mg(2+) as a cofactor. Requires Mn(2+) as cofactor.

It catalyses the reaction gamma-L-glutamyl-L-cysteine + glycine + ATP = glutathione + ADP + phosphate + H(+). The protein operates within sulfur metabolism; glutathione biosynthesis; glutathione from L-cysteine and L-glutamate: step 2/2. This Vibrio parahaemolyticus serotype O3:K6 (strain RIMD 2210633) protein is Glutathione synthetase.